A 287-amino-acid chain; its full sequence is Protease HtpX (287 aa).

A run of 2 helical transmembrane segments spans residues 4-24 and 33-53; these read IFLLIATNLAVLLVASIVMSI and GGLLVFAAIFGFGGAFISLAI. Zn(2+) is bound at residue H139. Residue E140 is part of the active site. H143 provides a ligand contact to Zn(2+). A run of 2 helical transmembrane segments spans residues 154-174 and 195-215; these read LIQGVVNTFVIFAARVVAGII and AVVFVLDMLFGILASIIVAYF. Zn(2+) is bound at residue E220.

The protein belongs to the peptidase M48B family. Zn(2+) is required as a cofactor.

The protein localises to the cell inner membrane. In Shewanella baltica (strain OS223), this protein is Protease HtpX.